The primary structure comprises 401 residues: L-rhamnonate dehydratase (401 aa).

Substrate-binding residues include H29 and R55. Mg(2+)-binding residues include D222, E248, and E276. H325 (proton acceptor) is an active-site residue. E345 lines the substrate pocket.

It belongs to the mandelate racemase/muconate lactonizing enzyme family. RhamD subfamily. In terms of assembly, homooctamer; tetramer of dimers. Mg(2+) serves as cofactor.

It carries out the reaction L-rhamnonate = 2-dehydro-3-deoxy-L-rhamnonate + H2O. Its function is as follows. Catalyzes the dehydration of L-rhamnonate to 2-keto-3-deoxy-L-rhamnonate (KDR). The sequence is that of L-rhamnonate dehydratase from Tolumonas auensis (strain DSM 9187 / NBRC 110442 / TA 4).